A 347-amino-acid chain; its full sequence is MILISDATLRDGNHAIRHQLSAAQIHAYARAADEAGIDVVEVGHGNGLGGSSCLLGQTPIGDRLMLETARAALRTSRLGVHFIPGLGKAADISLALEIGVDVVRVATHCTEANVSARFIEQTRAAGRTAFGVLMMSHMAPPDALLAQAKLMERYGAQAVVLMDSAGYSTPSLVRAKVERLVDGLDIDVGFHAHNNLGLAVANSLVALEAGARIVDACVKGFGAGAGNTQLETLVAAMEREGHDTRTTFERVMTLARGTETFLNPKTPHIQPANIASGLYGLFSGYVPHIQKAAQEFGVNEFELYKRLAERKLVAGQEDIIIEEASRLARERDVQRATGGVRVRELSA.

One can recognise a Pyruvate carboxyltransferase domain in the interval isoleucine 2–methionine 252. Arginine 10–aspartate 11 provides a ligand contact to substrate. Residue aspartate 11 coordinates Mn(2+). Histidine 14 acts as the Proton acceptor in catalysis. 2 residues coordinate substrate: serine 164 and histidine 191. Mn(2+)-binding residues include histidine 191 and histidine 193.

Belongs to the 4-hydroxy-2-oxovalerate aldolase family.

The catalysed reaction is (S)-4-hydroxy-2-oxopentanoate = acetaldehyde + pyruvate. The sequence is that of 4-hydroxy-2-oxovalerate aldolase (mhpE) from Burkholderia pseudomallei (strain 1710b).